Reading from the N-terminus, the 155-residue chain is Ribosome maturation factor RimP (155 aa).

The protein belongs to the RimP family.

The protein localises to the cytoplasm. In terms of biological role, required for maturation of 30S ribosomal subunits. The polypeptide is Ribosome maturation factor RimP (Deinococcus geothermalis (strain DSM 11300 / CIP 105573 / AG-3a)).